We begin with the raw amino-acid sequence, 3218 residues long: Serine/threonine-protein kinase Smg1 (3218 aa).

The tract at residues 32–78 is disordered; sequence LNNNGNHGDSSNEGGGGNGSGRGGATGSGNIAGLGGSESMWSPGGGK. Positions 33–43 are enriched in low complexity; that stretch reads NNNGNHGDSSN. The segment covering 44–67 has biased composition (gly residues); it reads EGGGGNGSGRGGATGSGNIAGLGG. Ser70 carries the post-translational modification Phosphoserine. Residues 1289–1692 enclose the FAT domain; that stretch reads DAAAAAREEG…IFPAVVGANR (404 aa). The HEAT repeat unit spans residues 1643-1678; the sequence is APWKVIIPQLFSRLNHHEPYVRKSVCDLLCRLAKSR. One can recognise a PI3K/PI4K catalytic domain in the interval 1897 to 2232; that stretch reads VESSVCVLPT…LGVGDLKYHK (336 aa). Residues 1903-1909 form a G-loop region; it reads VLPTKTK. Positions 2101-2109 are catalytic loop; that stretch reads GLGDRHLDN. Residues 2121–2145 form an activation loop region; that stretch reads HIDYNVCFEKGRTLRIPEKVPFRLT. The FATC domain occupies 3186 to 3218; it reads QRSTVAEQVDYVIREACNPENLAVLYEGWTPWV.

Belongs to the PI3/PI4-kinase family. As to quaternary structure, component of a post-splicing multiprotein NMD complex. Mn(2+) is required as a cofactor.

The protein localises to the cytoplasm. It carries out the reaction L-seryl-[protein] + ATP = O-phospho-L-seryl-[protein] + ADP + H(+). It catalyses the reaction L-threonyl-[protein] + ATP = O-phospho-L-threonyl-[protein] + ADP + H(+). Its function is as follows. Serine/threonine protein kinase involved in mRNA surveillance. Recognizes the substrate consensus sequence [ST]-Q. Involved in nonsense-mediated decay (NMD) of mRNAs containing premature stop codons, probably by phosphorylating Upf1. The chain is Serine/threonine-protein kinase Smg1 (nonC) from Drosophila melanogaster (Fruit fly).